The chain runs to 95 residues: Small ribosomal subunit protein bS6 (95 aa).

Belongs to the bacterial ribosomal protein bS6 family.

Binds together with bS18 to 16S ribosomal RNA. The sequence is that of Small ribosomal subunit protein bS6 from Corynebacterium jeikeium (strain K411).